Reading from the N-terminus, the 457-residue chain is Argininosuccinate lyase (457 aa).

It belongs to the lyase 1 family. Argininosuccinate lyase subfamily.

The protein resides in the cytoplasm. The catalysed reaction is 2-(N(omega)-L-arginino)succinate = fumarate + L-arginine. It functions in the pathway amino-acid biosynthesis; L-arginine biosynthesis; L-arginine from L-ornithine and carbamoyl phosphate: step 3/3. This is Argininosuccinate lyase from Aquifex aeolicus (strain VF5).